The following is a 193-amino-acid chain: Ion-translocating oxidoreductase complex subunit A (193 aa).

Helical transmembrane passes span isoleucine 5 to leucine 25, isoleucine 39 to valine 59, isoleucine 65 to valine 85, leucine 102 to leucine 122, valine 134 to leucine 154, and serine 171 to valine 191.

It belongs to the NqrDE/RnfAE family. As to quaternary structure, the complex is composed of six subunits: RnfA, RnfB, RnfC, RnfD, RnfE and RnfG.

The protein resides in the cell inner membrane. In terms of biological role, part of a membrane-bound complex that couples electron transfer with translocation of ions across the membrane. This is Ion-translocating oxidoreductase complex subunit A from Glaesserella parasuis serovar 5 (strain SH0165) (Haemophilus parasuis).